Here is a 106-residue protein sequence, read N- to C-terminus: PTS system N,N'-diacetylchitobiose-specific EIIB component (106 aa).

In terms of domain architecture, PTS EIIB type-3 spans 3 to 106 (KKHIYLFCSA…VAAIKKAAAN (104 aa)). Cysteine 10 (phosphocysteine intermediate) is an active-site residue. Residue cysteine 10 is modified to Phosphocysteine; by EIIA.

In terms of assembly, forms a complex with ChbA (EIIA). ChbB is a monomer in both its unphosphorylated and phosphorylated forms.

The protein resides in the cytoplasm. The catalysed reaction is N,N'-diacetylchitobiose(out) + N(pros)-phospho-L-histidyl-[protein] = diacetylchitobiose-6'-phosphate(in) + L-histidyl-[protein]. The phosphoenolpyruvate-dependent sugar phosphotransferase system (sugar PTS), a major carbohydrate active transport system, catalyzes the phosphorylation of incoming sugar substrates concomitantly with their translocation across the cell membrane. The enzyme II ChbABC PTS system is involved in the transport of the chitin disaccharide N,N'-diacetylchitobiose (GlcNAc2). The protein is PTS system N,N'-diacetylchitobiose-specific EIIB component (chbB) of Escherichia coli O157:H7.